Here is a 384-residue protein sequence, read N- to C-terminus: Dual-specificity RNA methyltransferase RlmN (384 aa).

The active-site Proton acceptor is the Glu105. Positions 111–350 (EDDRATLCVS…TIVRKTRGDD (240 aa)) constitute a Radical SAM core domain. A disulfide bond links Cys118 and Cys355. Cys125, Cys129, and Cys132 together coordinate [4Fe-4S] cluster. S-adenosyl-L-methionine contacts are provided by residues 179 to 180 (GE), Ser211, 233 to 235 (SLH), and Asn312. Cys355 acts as the S-methylcysteine intermediate in catalysis.

It belongs to the radical SAM superfamily. RlmN family. [4Fe-4S] cluster serves as cofactor.

The protein localises to the cytoplasm. The enzyme catalyses adenosine(2503) in 23S rRNA + 2 reduced [2Fe-2S]-[ferredoxin] + 2 S-adenosyl-L-methionine = 2-methyladenosine(2503) in 23S rRNA + 5'-deoxyadenosine + L-methionine + 2 oxidized [2Fe-2S]-[ferredoxin] + S-adenosyl-L-homocysteine. It carries out the reaction adenosine(37) in tRNA + 2 reduced [2Fe-2S]-[ferredoxin] + 2 S-adenosyl-L-methionine = 2-methyladenosine(37) in tRNA + 5'-deoxyadenosine + L-methionine + 2 oxidized [2Fe-2S]-[ferredoxin] + S-adenosyl-L-homocysteine. Functionally, specifically methylates position 2 of adenine 2503 in 23S rRNA and position 2 of adenine 37 in tRNAs. m2A2503 modification seems to play a crucial role in the proofreading step occurring at the peptidyl transferase center and thus would serve to optimize ribosomal fidelity. The sequence is that of Dual-specificity RNA methyltransferase RlmN from Escherichia coli O17:K52:H18 (strain UMN026 / ExPEC).